We begin with the raw amino-acid sequence, 306 residues long: Probable cobalamin biosynthesis protein CobD (306 aa).

Helical transmembrane passes span 54-74 (LFGF…AFEI), 88-108 (ISLY…IEFS), 155-175 (ITDS…PGAF), 207-227 (ILNF…APFY), and 286-306 (SLKA…ILFM).

It belongs to the CobD/CbiB family.

The protein resides in the cell membrane. The protein operates within cofactor biosynthesis; adenosylcobalamin biosynthesis. In terms of biological role, converts cobyric acid to cobinamide by the addition of aminopropanol on the F carboxylic group. The protein is Probable cobalamin biosynthesis protein CobD of Methanococcus maripaludis (strain DSM 14266 / JCM 13030 / NBRC 101832 / S2 / LL).